The chain runs to 185 residues: Protein OPG161 (185 aa).

At 1–33 (MMTPENDEEQTSVFSATVYGDKIQGKNKRKRVI) the chain is on the intravirion side. Residues 34–56 (GLCIRISMVISLLSMITMSAFLI) traverse the membrane as a helical segment. Residues 57–185 (VRLNQCMSAN…RKYFCVKTMN (129 aa)) are Virion surface-facing. Residues 98-185 (ESCNGLYYQG…RKYFCVKTMN (88 aa)) are C-type lectin-like domain. N-linked (GlcNAc...) asparagine; by host glycosylation is found at asparagine 125 and asparagine 135.

Belongs to the orthopoxvirus OPG161 family. As to quaternary structure, homodimer, disulfide-linked. Interacts with protein OPG190. Interacts (via C-terminus) with protein OPG164. Interacts with OPG162.

Its subcellular location is the virion membrane. It is found in the host membrane. Forms a complex with OPG162 and OPG190 to coordinate the incorporation of OPG164 into wrapped enveloped virion (EV) membranes and, subsequently, the production of actin tails. Therefore plays an essential role in efficient cell-to-cell spread of viral particles. The polypeptide is Protein OPG161 (OPG161) (Homo sapiens (Human)).